The primary structure comprises 103 residues: Large ribosomal subunit protein uL24 (103 aa).

The protein belongs to the universal ribosomal protein uL24 family. In terms of assembly, part of the 50S ribosomal subunit.

In terms of biological role, one of two assembly initiator proteins, it binds directly to the 5'-end of the 23S rRNA, where it nucleates assembly of the 50S subunit. Functionally, one of the proteins that surrounds the polypeptide exit tunnel on the outside of the subunit. The sequence is that of Large ribosomal subunit protein uL24 (rplX) from Bacillus spizizenii (strain ATCC 23059 / NRRL B-14472 / W23) (Bacillus subtilis subsp. spizizenii).